Reading from the N-terminus, the 422-residue chain is Serine--tRNA ligase (422 aa).

229-231 (TAE) provides a ligand contact to L-serine. An ATP-binding site is contributed by 260-262 (RRE). Glu-283 contributes to the L-serine binding site. 347–350 (EISS) serves as a coordination point for ATP. Ser-383 contacts L-serine.

It belongs to the class-II aminoacyl-tRNA synthetase family. Type-1 seryl-tRNA synthetase subfamily. In terms of assembly, homodimer. The tRNA molecule binds across the dimer.

It is found in the cytoplasm. It catalyses the reaction tRNA(Ser) + L-serine + ATP = L-seryl-tRNA(Ser) + AMP + diphosphate + H(+). It carries out the reaction tRNA(Sec) + L-serine + ATP = L-seryl-tRNA(Sec) + AMP + diphosphate + H(+). It functions in the pathway aminoacyl-tRNA biosynthesis; selenocysteinyl-tRNA(Sec) biosynthesis; L-seryl-tRNA(Sec) from L-serine and tRNA(Sec): step 1/1. Functionally, catalyzes the attachment of serine to tRNA(Ser). Is also able to aminoacylate tRNA(Sec) with serine, to form the misacylated tRNA L-seryl-tRNA(Sec), which will be further converted into selenocysteinyl-tRNA(Sec). The protein is Serine--tRNA ligase of Pelobacter propionicus (strain DSM 2379 / NBRC 103807 / OttBd1).